The chain runs to 23 residues: Acidic phospholipase A2 CTs-A1 (23 aa).

Ca(2+) is required as a cofactor. Contains 7 disulfide bonds. Expressed by the venom gland.

Its subcellular location is the secreted. The enzyme catalyses a 1,2-diacyl-sn-glycero-3-phosphocholine + H2O = a 1-acyl-sn-glycero-3-phosphocholine + a fatty acid + H(+). Its function is as follows. Snake venom phospholipase A2 (PLA2) that shows a moderate inhibition of ADP-induced human platelet aggregation when tested on platelet rich plasma. Exhibits moderate hydrolytic activities and prefers the anionic micelles (dPPC with deoxycholate) to the zwitterionic micelles (dPPC with Triton X-100). PLA2 catalyzes the calcium-dependent hydrolysis of the 2-acyl groups in 3-sn-phosphoglycerides. This chain is Acidic phospholipase A2 CTs-A1, found in Trimeresurus stejnegeri (Chinese green tree viper).